The sequence spans 245 residues: MAALSCLLDSVRRDIKKVDRELRQLRCIDEISSRCLCDLYMHPYCCCDLHPYPYCLCYSKRSRSCGLCDLYYPCCLCDYKLYCLRPSLRSLERLRRTTNRILASSCCSSNILGSVNVCGFEPDQVKVRVKDGKVCVSAERENRYDCLGSKKYSYMNICKEFSLPPCVDEKDVTYSYGLGSCVKIESPCYPCTSPCNPCNPCSPCSPCGPCGPCGPCGPCGPCGPCDPCNPCYPCGSRFSCRKMIL.

Phosphoserine occurs at positions 5 and 10. Repeat 1 spans residues 34–38; sequence RCLCD. Residues 34-78 form a 2 X 5 AA repeats of [RC]-C-L-C-D region; sequence RCLCDLYMHPYCCCDLHPYPYCLCYSKRSRSCGLCDLYYPCCLCD. Phosphoserine is present on serine 64. Copy 2 of the repeat occupies 74–78; sequence CCLCD. Phosphoserine occurs at positions 87, 108, 109, 137, 153, 175, and 180. The C-X-P repeat region stretch occupies residues 195-233; that stretch reads CNPCNPCSPCSPCGPCGPCGPCGPCGPCGPCDPCNPCYP.

As to quaternary structure, interacts (via leucine zipper motif) with TCP11. Interacts with SPAG4. Interacts with KLC3. Interacts with CCDC42. In terms of tissue distribution, testis. Specifically located to the round spermatid layer and to the luminally-oriented cytoplasm of elongated spermatids.

The protein localises to the cell projection. It localises to the cilium. Its subcellular location is the flagellum. The protein resides in the cytoplasm. It is found in the cytoskeleton. The protein localises to the microtubule organizing center. It localises to the centrosome. Its function is as follows. Component of the outer dense fibers (ODF) of spermatozoa. ODF are filamentous structures located on the outside of the axoneme in the midpiece and principal piece of the mammalian sperm tail and may help to maintain the passive elastic structures and elastic recoil of the sperm tail. This chain is Outer dense fiber protein 1 (Odf1), found in Rattus norvegicus (Rat).